Here is an 87-residue protein sequence, read N- to C-terminus: Small ribosomal subunit protein bS18 (87 aa).

It belongs to the bacterial ribosomal protein bS18 family. Part of the 30S ribosomal subunit. Forms a tight heterodimer with protein bS6.

In terms of biological role, binds as a heterodimer with protein bS6 to the central domain of the 16S rRNA, where it helps stabilize the platform of the 30S subunit. The sequence is that of Small ribosomal subunit protein bS18 from Sulfurimonas denitrificans (strain ATCC 33889 / DSM 1251) (Thiomicrospira denitrificans (strain ATCC 33889 / DSM 1251)).